The primary structure comprises 36 residues: Photosystem II reaction center protein M (36 aa).

A helical transmembrane segment spans residues G7–I27.

This sequence belongs to the PsbM family. In terms of assembly, PSII is composed of 1 copy each of membrane proteins PsbA, PsbB, PsbC, PsbD, PsbE, PsbF, PsbH, PsbI, PsbJ, PsbK, PsbL, PsbM, PsbT, PsbX, PsbY, PsbZ, Psb30/Ycf12, peripheral proteins PsbO, CyanoQ (PsbQ), PsbU, PsbV and a large number of cofactors. It forms dimeric complexes.

Its subcellular location is the cellular thylakoid membrane. In terms of biological role, one of the components of the core complex of photosystem II (PSII). PSII is a light-driven water:plastoquinone oxidoreductase that uses light energy to abstract electrons from H(2)O, generating O(2) and a proton gradient subsequently used for ATP formation. It consists of a core antenna complex that captures photons, and an electron transfer chain that converts photonic excitation into a charge separation. This subunit is found at the monomer-monomer interface. This is Photosystem II reaction center protein M from Synechococcus sp. (strain CC9311).